The chain runs to 353 residues: Uroporphyrinogen decarboxylase (353 aa).

Residues 25–29 (RQAGR), Asp74, Tyr151, Ser206, and His325 contribute to the substrate site.

It belongs to the uroporphyrinogen decarboxylase family. Homodimer.

It is found in the cytoplasm. The catalysed reaction is uroporphyrinogen III + 4 H(+) = coproporphyrinogen III + 4 CO2. The protein operates within porphyrin-containing compound metabolism; protoporphyrin-IX biosynthesis; coproporphyrinogen-III from 5-aminolevulinate: step 4/4. Catalyzes the decarboxylation of four acetate groups of uroporphyrinogen-III to yield coproporphyrinogen-III. This chain is Uroporphyrinogen decarboxylase, found in Chloroherpeton thalassium (strain ATCC 35110 / GB-78).